We begin with the raw amino-acid sequence, 268 residues long: tRNA pseudouridine synthase A (268 aa).

The Nucleophile role is filled by Asp52. Tyr110 provides a ligand contact to substrate.

The protein belongs to the tRNA pseudouridine synthase TruA family. In terms of assembly, homodimer.

It carries out the reaction uridine(38/39/40) in tRNA = pseudouridine(38/39/40) in tRNA. In terms of biological role, formation of pseudouridine at positions 38, 39 and 40 in the anticodon stem and loop of transfer RNAs. In Prochlorococcus marinus (strain MIT 9215), this protein is tRNA pseudouridine synthase A.